Here is a 377-residue protein sequence, read N- to C-terminus: Dihydroorotate dehydrogenase (quinone) (377 aa).

FMN contacts are provided by residues 82-86 and T106; that span reads AGFDK. K86 is a substrate binding site. 131–135 contributes to the substrate binding site; sequence NRMGF. The FMN site is built by N159 and N192. N192 contributes to the substrate binding site. S195 serves as the catalytic Nucleophile. N197 is a substrate binding site. Residues K228 and T256 each coordinate FMN. 257 to 258 is a binding site for substrate; the sequence is NT. Residues G282, G311, and 332-333 contribute to the FMN site; that span reads YT.

The protein belongs to the dihydroorotate dehydrogenase family. Type 2 subfamily. Monomer. It depends on FMN as a cofactor.

The protein localises to the cell membrane. It catalyses the reaction (S)-dihydroorotate + a quinone = orotate + a quinol. It participates in pyrimidine metabolism; UMP biosynthesis via de novo pathway; orotate from (S)-dihydroorotate (quinone route): step 1/1. In terms of biological role, catalyzes the conversion of dihydroorotate to orotate with quinone as electron acceptor. This Corynebacterium efficiens (strain DSM 44549 / YS-314 / AJ 12310 / JCM 11189 / NBRC 100395) protein is Dihydroorotate dehydrogenase (quinone).